The primary structure comprises 519 residues: uncharacterized protein (519 aa).

A run of 14 helical transmembrane segments spans residues 37 to 57 (ISMS…AQLM), 82 to 102 (GQLS…ILIA), 114 to 134 (MFVL…FSYY), 146 to 166 (ALTG…LGRV), 175 to 195 (LIFA…SVFS), 209 to 229 (WTTA…IPHI), 240 to 260 (FDYL…FSWN), 269 to 289 (VPYV…FVLV), 309 to 329 (CVLI…YYLW), 337 to 357 (FATP…GCAA), 373 to 393 (IMVV…TAPI), 402 to 422 (FVSI…ATLM), 434 to 454 (IAAS…LGIA), and 475 to 495 (AWYM…LTVF).

Belongs to the major facilitator superfamily.

The protein resides in the endoplasmic reticulum. It is found in the membrane. This is an uncharacterized protein from Schizosaccharomyces pombe (strain 972 / ATCC 24843) (Fission yeast).